A 421-amino-acid chain; its full sequence is Testin (421 aa).

One can recognise a PET domain in the interval 92-199; it reads MILTNPVAAK…GDVKLPCEMD (108 aa). The segment at 133 to 164 is disordered; sequence EKQPVAGSEGAQYRKKQLAKQLPAHDQDPSKC. Residues 155-164 are compositionally biased toward basic and acidic residues; the sequence is PAHDQDPSKC. 3 consecutive LIM zinc-binding domains span residues 234–297, 299–359, and 362–421; these read YSCY…CDSE, PRCA…NHAV, and QGCH…KMMS.

It belongs to the prickle / espinas / testin family. As to quaternary structure, interacts via LIM domain 1 with ZYX. Interacts (via LIM domain 3) with ENAH and VASP. Interacts with ALKBH4, talin, actin, alpha-actinin, GRIP1 and PXN. Interacts (via LIM domain 2) with ACTL7A (via N-terminus). Heterodimer with ACTL7A; the heterodimer interacts with ENAH to form a heterotrimer.

The protein localises to the cytoplasm. Its subcellular location is the cell junction. It is found in the focal adhesion. Its function is as follows. Scaffold protein that may play a role in cell adhesion, cell spreading and in the reorganization of the actin cytoskeleton. Plays a role in the regulation of cell proliferation. May act as a tumor suppressor. The chain is Testin (TES) from Papio anubis (Olive baboon).